The sequence spans 358 residues: tRNA(Ile)-lysidine synthase (358 aa).

35-40 (SGGPDS) provides a ligand contact to ATP.

It belongs to the tRNA(Ile)-lysidine synthase family.

It is found in the cytoplasm. The catalysed reaction is cytidine(34) in tRNA(Ile2) + L-lysine + ATP = lysidine(34) in tRNA(Ile2) + AMP + diphosphate + H(+). Ligates lysine onto the cytidine present at position 34 of the AUA codon-specific tRNA(Ile) that contains the anticodon CAU, in an ATP-dependent manner. Cytidine is converted to lysidine, thus changing the amino acid specificity of the tRNA from methionine to isoleucine. The protein is tRNA(Ile)-lysidine synthase of Bradyrhizobium sp. (strain BTAi1 / ATCC BAA-1182).